A 357-amino-acid chain; its full sequence is DNA replication and repair protein RecF (357 aa).

30–37 is an ATP binding site; sequence GANGSGKT.

Belongs to the RecF family.

It localises to the cytoplasm. Its function is as follows. The RecF protein is involved in DNA metabolism; it is required for DNA replication and normal SOS inducibility. RecF binds preferentially to single-stranded, linear DNA. It also seems to bind ATP. This Shigella flexneri serotype 5b (strain 8401) protein is DNA replication and repair protein RecF.